The chain runs to 318 residues: uncharacterized protein (318 aa).

2 helical membrane passes run 230–250 and 264–284; these read VWTY…SFLI and ASLM…LGVI.

This sequence belongs to the glycosyltransferase 2 family. GtrB subfamily.

It localises to the cell membrane. This is an uncharacterized protein from Synechocystis sp. (strain ATCC 27184 / PCC 6803 / Kazusa).